Reading from the N-terminus, the 125-residue chain is Short coiled-coil protein (125 aa).

The disordered stretch occupies residues methionine 1 to lysine 31. A coiled-coil region spans residues lysine 43 to leucine 101.

It belongs to the SCOC family. Homodimer. Interacts with ARL1, ARL2 and ARL3. Directly interacts with FEZ1 and UVRAG. The interaction with UVRAG is reduced by amino acid starvation, but the complex is stabilized in the presence of FEZ1. Interacts with NRBF2.

Its subcellular location is the golgi apparatus membrane. It is found in the golgi apparatus. It localises to the trans-Golgi network. The protein resides in the cytoplasm. The protein localises to the cytosol. Its function is as follows. Positive regulator of amino acid starvation-induced autophagy. In Mus musculus (Mouse), this protein is Short coiled-coil protein (Scoc).